The following is a 393-amino-acid chain: Prokineticin receptor 1 (393 aa).

Residues M1–I63 are Extracellular-facing. N-linked (GlcNAc...) asparagine glycosylation is found at N11, N14, and N36. The chain crosses the membrane as a helical span at residues V64 to I84. Topologically, residues A85–N98 are cytoplasmic. A helical membrane pass occupies residues L99–E119. Residues M120–T145 are Extracellular-facing. Cysteines 137 and 217 form a disulfide. Residues V146–I166 traverse the membrane as a helical segment. Topologically, residues V167–A179 are cytoplasmic. The helical transmembrane segment at T180–F200 threads the bilayer. Residues T201–Y232 lie on the Extracellular side of the membrane. Residues F233–A253 form a helical membrane-spanning segment. The Cytoplasmic segment spans residues R254–T282. Residues V283–F303 form a helical membrane-spanning segment. Over A304 to T322 the chain is Extracellular. The helical transmembrane segment at A323–V343 threads the bilayer. Residues T344–K393 are Cytoplasmic-facing.

This sequence belongs to the G-protein coupled receptor 1 family.

Its subcellular location is the cell membrane. Its function is as follows. Receptor for prokineticin 1. Exclusively coupled to the G(q) subclass of heteromeric G proteins. Activation leads to mobilization of calcium, stimulation of phosphoinositide turnover and activation of p44/p42 mitogen-activated protein kinase. May play a role during early pregnancy. This is Prokineticin receptor 1 (PROKR1) from Bos taurus (Bovine).